A 461-amino-acid chain; its full sequence is Alpha-tubulin N-acetyltransferase 1 (461 aa).

Positions 2 to 189 constitute an N-acetyltransferase domain; the sequence is VEFRFDIKPL…NNFVLYEGFF (188 aa). Residues 123–136 and 159–168 each bind acetyl-CoA; these read FYVH…GLGK and SEKLLSFLSK. 3 disordered regions span residues 196-295, 314-362, and 418-443; these read NGGG…GNHD, NSYE…PEVA, and RPPG…SGGG. The segment covering 233-254 has biased composition (polar residues); that stretch reads RRGSQQQTTPNARLQQITQISP. Over residues 283–293 the composition is skewed to low complexity; it reads GSAEANSGNGN. The segment covering 318–336 has biased composition (acidic residues); sequence PEPEVEPEPEPEPEPEPEP. The segment covering 339–356 has biased composition (pro residues); it reads ITPPSPPPKSHTPTPPSV. The segment covering 426 to 439 has biased composition (polar residues); it reads SPGQDNTDAMSTVS.

It belongs to the acetyltransferase ATAT1 family.

The enzyme catalyses L-lysyl-[alpha-tubulin] + acetyl-CoA = N(6)-acetyl-L-lysyl-[alpha-tubulin] + CoA + H(+). Functionally, specifically acetylates 'Lys-40' in alpha-tubulin on the lumenal side of microtubules. Promotes microtubule destabilization and accelerates microtubule dynamics; this activity may be independent of acetylation activity. Acetylates alpha-tubulin with a slow enzymatic rate, due to a catalytic site that is not optimized for acetyl transfer. Enters the microtubule through each end and diffuses quickly throughout the lumen of microtubules. Acetylates only long/old microtubules because of its slow acetylation rate since it does not have time to act on dynamically unstable microtubules before the enzyme is released. Acetylates central spindle microtubules. The polypeptide is Alpha-tubulin N-acetyltransferase 1 (Drosophila melanogaster (Fruit fly)).